Consider the following 537-residue polypeptide: Hexahomomethionine N-hydroxylase (537 aa).

The chain crosses the membrane as a helical span at residues 7 to 27; that stretch reads FNTCFQILLGFIVFIASITLL.

This sequence belongs to the cytochrome P450 family. The cofactor is heme. In terms of tissue distribution, highly expressed in hypocotyl and roots. Lower expression in siliques, stems and leaves. Barely detectable in flowers. Expressed only in the vascular bundles in apical plant parts.

The protein localises to the endoplasmic reticulum membrane. It catalyses the reaction L-hexahomomethionine + 2 reduced [NADPH--hemoprotein reductase] + 2 O2 = (E)-9-(methylsulfanyl)nonanal oxime + 2 oxidized [NADPH--hemoprotein reductase] + CO2 + 3 H2O + 2 H(+). The enzyme catalyses L-pentahomomethionine + 2 reduced [NADPH--hemoprotein reductase] + 2 O2 = (E)-8-(methylsulfanyl)octanal oxime + 2 oxidized [NADPH--hemoprotein reductase] + CO2 + 3 H2O + 2 H(+). It carries out the reaction an L-polyhomomethionine + 2 reduced [NADPH--hemoprotein reductase] + 2 O2 = an (E)-omega-(methylsulfanyl)-alkanal oxime + 2 oxidized [NADPH--hemoprotein reductase] + CO2 + 3 H2O + 2 H(+). Catalyzes the conversion of the long chain elongated methionines penta- and hexahomomethionine to their corresponding aldoximes 8-methylthiooctanaldoxime and 9-methylthiononanaldoxime. This is Hexahomomethionine N-hydroxylase (CYP79F2) from Arabidopsis thaliana (Mouse-ear cress).